A 78-amino-acid chain; its full sequence is Exodeoxyribonuclease 7 small subunit (78 aa).

The protein belongs to the XseB family. In terms of assembly, heterooligomer composed of large and small subunits.

It is found in the cytoplasm. The catalysed reaction is Exonucleolytic cleavage in either 5'- to 3'- or 3'- to 5'-direction to yield nucleoside 5'-phosphates.. In terms of biological role, bidirectionally degrades single-stranded DNA into large acid-insoluble oligonucleotides, which are then degraded further into small acid-soluble oligonucleotides. In Pediococcus pentosaceus (strain ATCC 25745 / CCUG 21536 / LMG 10740 / 183-1w), this protein is Exodeoxyribonuclease 7 small subunit.